The chain runs to 508 residues: Light-independent protochlorophyllide reductase subunit B (508 aa).

D36 contributes to the [4Fe-4S] cluster binding site. The active-site Proton donor is the D294. 429 to 430 provides a ligand contact to substrate; that stretch reads GM.

Belongs to the ChlB/BchB/BchZ family. As to quaternary structure, protochlorophyllide reductase is composed of three subunits; ChlL, ChlN and ChlB. Forms a heterotetramer of two ChlB and two ChlN subunits. It depends on [4Fe-4S] cluster as a cofactor.

The enzyme catalyses chlorophyllide a + oxidized 2[4Fe-4S]-[ferredoxin] + 2 ADP + 2 phosphate = protochlorophyllide a + reduced 2[4Fe-4S]-[ferredoxin] + 2 ATP + 2 H2O. It functions in the pathway porphyrin-containing compound metabolism; chlorophyll biosynthesis (light-independent). In terms of biological role, component of the dark-operative protochlorophyllide reductase (DPOR) that uses Mg-ATP and reduced ferredoxin to reduce ring D of protochlorophyllide (Pchlide) to form chlorophyllide a (Chlide). This reaction is light-independent. The NB-protein (ChlN-ChlB) is the catalytic component of the complex. The protein is Light-independent protochlorophyllide reductase subunit B of Gloeothece citriformis (strain PCC 7424) (Cyanothece sp. (strain PCC 7424)).